Reading from the N-terminus, the 631-residue chain is Acurin A biosynthesis cluster transcription regulator (631 aa).

Positions 1 to 11 are enriched in polar residues; the sequence is MSPNMSLTASH. Residues 1 to 28 are disordered; it reads MSPNMSLTASHPQQPQPTPQSKAQLTRQ. The segment at residues 30-62 is a DNA-binding region (zn(2)-C6 fungal-type); that stretch reads CNRCHASKLKCLRPPGVTTSKSCIRCIKADTEC. 3 disordered regions span residues 64–141, 489–522, and 536–573; these read YDPP…PDNR, CSSS…HPAT, and HSSS…YPTP. Residues 88-99 show a composition bias toward basic and acidic residues; it reads IEAREPEVTDPR. The segment covering 119 to 128 has biased composition (polar residues); sequence NGSLAPSSAA.

It is found in the nucleus. Functionally, transcription factor that positively regulates the expression of the cluster that mediates the biosynthesis of acurin A, a highly reduced polyketide coupled to a serine via a peptide bond. This is Acurin A biosynthesis cluster transcription regulator from Aspergillus aculeatus (strain ATCC 16872 / CBS 172.66 / WB 5094).